The following is a 494-amino-acid chain: Glutamate--tRNA ligase (494 aa).

Positions 10–20 (PSPTGDPHVGT) match the 'HIGH' region motif. Zn(2+) is bound by residues Cys107, Cys109, Cys134, and His136. Residues 251-255 (KLSKR) carry the 'KMSKS' region motif. Residue Lys254 coordinates ATP.

It belongs to the class-I aminoacyl-tRNA synthetase family. Glutamate--tRNA ligase type 1 subfamily. In terms of assembly, monomer. The cofactor is Zn(2+).

It localises to the cytoplasm. The enzyme catalyses tRNA(Glu) + L-glutamate + ATP = L-glutamyl-tRNA(Glu) + AMP + diphosphate. Its function is as follows. Catalyzes the attachment of glutamate to tRNA(Glu) in a two-step reaction: glutamate is first activated by ATP to form Glu-AMP and then transferred to the acceptor end of tRNA(Glu). The sequence is that of Glutamate--tRNA ligase from Pseudomonas aeruginosa (strain UCBPP-PA14).